The primary structure comprises 264 residues: Indole-3-glycerol phosphate synthase (264 aa).

It belongs to the TrpC family.

The enzyme catalyses 1-(2-carboxyphenylamino)-1-deoxy-D-ribulose 5-phosphate + H(+) = (1S,2R)-1-C-(indol-3-yl)glycerol 3-phosphate + CO2 + H2O. It participates in amino-acid biosynthesis; L-tryptophan biosynthesis; L-tryptophan from chorismate: step 4/5. In Xylella fastidiosa (strain M23), this protein is Indole-3-glycerol phosphate synthase.